Consider the following 215-residue polypeptide: Probable transaldolase (215 aa).

Catalysis depends on K83, which acts as the Schiff-base intermediate with substrate.

It belongs to the transaldolase family. Type 3B subfamily.

It is found in the cytoplasm. The catalysed reaction is D-sedoheptulose 7-phosphate + D-glyceraldehyde 3-phosphate = D-erythrose 4-phosphate + beta-D-fructose 6-phosphate. Its pathway is carbohydrate degradation; pentose phosphate pathway; D-glyceraldehyde 3-phosphate and beta-D-fructose 6-phosphate from D-ribose 5-phosphate and D-xylulose 5-phosphate (non-oxidative stage): step 2/3. Functionally, transaldolase is important for the balance of metabolites in the pentose-phosphate pathway. This chain is Probable transaldolase, found in Methanococcus maripaludis (strain C5 / ATCC BAA-1333).